We begin with the raw amino-acid sequence, 266 residues long: Diphthine synthase (266 aa).

S-adenosyl-L-methionine-binding positions include Leu-9, Asp-85, Ile-88, 113–114 (TA), Leu-168, Ala-210, and His-235.

Belongs to the diphthine synthase family. In terms of assembly, homodimer.

The catalysed reaction is 2-[(3S)-amino-3-carboxypropyl]-L-histidyl-[translation elongation factor 2] + 3 S-adenosyl-L-methionine = diphthine-[translation elongation factor 2] + 3 S-adenosyl-L-homocysteine + 3 H(+). It participates in protein modification; peptidyl-diphthamide biosynthesis. S-adenosyl-L-methionine-dependent methyltransferase that catalyzes the trimethylation of the amino group of the modified target histidine residue in translation elongation factor 2 (EF-2), to form an intermediate called diphthine. The three successive methylation reactions represent the second step of diphthamide biosynthesis. In Natronomonas pharaonis (strain ATCC 35678 / DSM 2160 / CIP 103997 / JCM 8858 / NBRC 14720 / NCIMB 2260 / Gabara) (Halobacterium pharaonis), this protein is Diphthine synthase.